A 97-amino-acid polypeptide reads, in one-letter code: MARSLFKAKLLLAPVADGISLSISRRGYAAAAPLGTISRTGIMEKNDLRPAVREDSGASSAWAPDPITGYYRPENRAVEIDPAELREMLLNHKVRAH.

This sequence belongs to the LEA type 3 family.

In Citrus sinensis (Sweet orange), this protein is Late embryogenesis abundant protein Lea5 (LEA5).